The following is a 735-amino-acid chain: MSGFDDLGVYYSDSFGGEQQVGDDGQAKKSQLKKRFREFLRQYRIGTDRTGFTFKYRDELKRHYNLGEYWIEVEMEDLASFDEDLADYLYKQPTEHLQLLEEAAQEVADEVTRPRPAGEETIQEIQVMLRSDANPANIRSLKSEQMSHLVKIPGIIIAATAVRAKATKISIQCRSCRNTIGNIAVRPGLEGYAMPRKCNTEQAGRPNCPLDPYFIIPDKCKCVDFQTLKLQESPDAVPHGELPRHMQLYCDRYLCDKVVPGNRVTIMGIYSIRKSGKTSTKGRDRVGVGIRSSYIRVVGIQVDTEGTGRSAAGAITPQEEEEFRRLAAKPDIYETVAKSIAPSIYGSSDIKKAIACLLFGGSRKRLPDGLTRRGDVNLLMLGDPGTAKSQLLKFVERCSPIGVYTSGKGSSAAGLTASVMRDPVSRNFIMEGGAMVLADGGVVCIDEFDKMREDDRVAIHEAMEQQTISIAKAGITTTLNSRCSVLAAANSVYGRWDDTKGEENIDFMPTILSRFDMIFIVKDEHNEQRDMTLAKHVMNVHLSARTQSSSVEGEVDLNTLKKYIAYCRAKCGPRLSAEAAEKLKNRYILMRSGAREHERETEKRSSIPITVRQLEAIVRISESLGKMKLQPFATETDVEEALRLFQVSTLDAAMSGSLSGVEGFTTQEDQEMLSRIEKQMKKRFAIGSQVSEHSIIQDFLKQKYPEHAIHKVLSLMMRRGEIQHRLQRKVLYRIK.

Residues isoleucine 332–methionine 538 enclose the MCM domain. Arginine 372 provides a ligand contact to ADP. The Arginine finger motif lies at serine 513–aspartate 516.

The protein belongs to the MCM family. Component of the mcm2-7 complex (RLF-M). The complex forms a toroidal hexameric ring with the proposed subunit order mcm2-mcm6-mcm4-mcm7-mcm3-mcm5. The heterodimer of mmcm3/mcm5 interacts with mcm4, mmcm6, mcm7 and weakly with mcm2. Component of the CMG helicase complex, composed of the mcm2-7 complex, the GINS complex and cdc45.

It localises to the nucleus. The protein resides in the chromosome. It catalyses the reaction ATP + H2O = ADP + phosphate + H(+). Functionally, acts as a component of the MCM2-7 complex (MCM complex) which is the replicative helicase essential for 'once per cell cycle' DNA replication initiation and elongation in eukaryotic cells. Core component of CDC45-MCM-GINS (CMG) helicase, the molecular machine that unwinds template DNA during replication, and around which the replisome is built. The active ATPase sites in the MCM2-7 ring are formed through the interaction surfaces of two neighboring subunits such that a critical structure of a conserved arginine finger motif is provided in trans relative to the ATP-binding site of the Walker A box of the adjacent subunit. The six ATPase active sites, however, are likely to contribute differentially to the complex helicase activity. The sequence is that of DNA replication licensing factor mcm5-A (mcm5-a) from Xenopus laevis (African clawed frog).